The primary structure comprises 639 residues: C-type lectin domain-containing protein 160 (639 aa).

The N-terminal stretch at Met1–Thr19 is a signal peptide. VWFA domains lie at Asp31–Gly178 and Asp289–Val474. The C-type lectin domain maps to Lys491 to Tyr618. Cys594 and Cys614 are disulfide-bonded.

The protein resides in the secreted. The sequence is that of C-type lectin domain-containing protein 160 (clec-160) from Caenorhabditis elegans.